Reading from the N-terminus, the 203-residue chain is uncharacterized protein (203 aa).

This is an uncharacterized protein from Haemophilus influenzae (strain ATCC 51907 / DSM 11121 / KW20 / Rd).